Reading from the N-terminus, the 527-residue chain is Peptide chain release factor 3 (527 aa).

The 269-residue stretch at 9-277 (AKRRTFAIIS…AVVNWAPKPL (269 aa)) folds into the tr-type G domain. Residues 18–25 (SHPDAGKT), 86–90 (DTPGH), and 140–143 (NKLD) contribute to the GTP site.

The protein belongs to the TRAFAC class translation factor GTPase superfamily. Classic translation factor GTPase family. PrfC subfamily.

Its subcellular location is the cytoplasm. Functionally, increases the formation of ribosomal termination complexes and stimulates activities of RF-1 and RF-2. It binds guanine nucleotides and has strong preference for UGA stop codons. It may interact directly with the ribosome. The stimulation of RF-1 and RF-2 is significantly reduced by GTP and GDP, but not by GMP. This is Peptide chain release factor 3 from Pseudomonas savastanoi pv. phaseolicola (strain 1448A / Race 6) (Pseudomonas syringae pv. phaseolicola (strain 1448A / Race 6)).